A 432-amino-acid chain; its full sequence is uncharacterized protein (432 aa).

SIS domains lie at 105–244 (WLTE…DLVS) and 277–422 (CDKK…VDLP).

This is an uncharacterized protein from Saccharomyces cerevisiae (strain ATCC 204508 / S288c) (Baker's yeast).